Consider the following 275-residue polypeptide: Fos-related antigen 1 (275 aa).

Disordered stretches follow at residues 1-33 and 71-115; these read MYRD…QTVQ and TYPQ…VRRE. The span at 7–33 shows a compositional bias: low complexity; that stretch reads EPGPSSGAGSAYGRPAQPQQAQTQTVQ. The bZIP domain occupies 107–170; the sequence is EERRRVRRER…ERLELVLEAH (64 aa). The tract at residues 109–129 is basic motif; the sequence is RRRVRRERNKLAAAKCRNRRK. Residues 135 to 163 form a leucine-zipper region; that stretch reads LQAETDKLEDEKSGLQREIEELQKQKERL. Over residues 171–184 the composition is skewed to basic and acidic residues; the sequence is RPICKIPEEDKKDT. A disordered region spans residues 171-275; that stretch reads RPICKIPEED…PLGSPTLLAL (105 aa). 3 stretches are compositionally biased toward low complexity: residues 185–194, 219–237, and 256–275; these read GGTSSTSGAG, LHTP…TPSL, and SSSS…LLAL. S269 carries the post-translational modification Phosphoserine.

It belongs to the bZIP family. Fos subfamily. As to quaternary structure, heterodimer. Interacts with the BAF multiprotein chromatin-remodeling complex subunits SMARCB1 and SMARCD1. Interacts with ARID1A and JUN.

Its subcellular location is the nucleus. This Rattus norvegicus (Rat) protein is Fos-related antigen 1 (Fosl1).